A 320-amino-acid polypeptide reads, in one-letter code: MPTGDFDSKPSWADQVEEEGEDDKCVTSELLKGIPLPTGDTSPEPELLPGDPLPPPKEVINGNIKTVTEYKVEEDGKKFKIVRTFRIETRKASKAVARRKNWKKFGNSEFDPPGPNVATTTVSDDVSMTFITSKEDLNCQEEEDPMNKLKGQKIVSCRICKGDHWTTRCPYKDTLGPMQKELAEQLGLSTGEKEKLPGELEPVQAAQNKTGKYVPPSLRDGASRRGESMQPNRRADDNATIRVTNLSEDTRETDLQELFRPFGSISRIYLAKDKTTGQSKGFAFISFHRREDAARAIAGVSGFGYDHLILNVEWAKPSTN.

The disordered stretch occupies residues 1–60; sequence MPTGDFDSKPSWADQVEEEGEDDKCVTSELLKGIPLPTGDTSPEPELLPGDPLPPPKEVI. Phosphoserine is present on residues Ser-8 and Ser-11. Residues Thr-38 and Thr-41 each carry the phosphothreonine modification. A phosphoserine mark is found at Ser-42, Ser-189, Ser-223, and Ser-264. The segment at 205 to 233 is disordered; that stretch reads AAQNKTGKYVPPSLRDGASRRGESMQPNR. A compositionally biased stretch (basic and acidic residues) spans 221–233; that stretch reads GASRRGESMQPNR. An RRM domain is found at 239 to 317; it reads ATIRVTNLSE…LILNVEWAKP (79 aa).

Belongs to the eIF-3 subunit G family. Component of the eukaryotic translation initiation factor 3 (eIF-3) complex, which is composed of 13 subunits: EIF3A, EIF3B, EIF3C, EIF3D, EIF3E, EIF3F, EIF3G, EIF3H, EIF3I, EIF3J, EIF3K, EIF3L and EIF3M. The eIF-3 complex appears to include 3 stable modules: module A is composed of EIF3A, EIF3B, EIF3G and EIF3I; module B is composed of EIF3F, EIF3H, and EIF3M; and module C is composed of EIF3C, EIF3D, EIF3E, EIF3K and EIF3L. EIF3C of module C binds EIF3B of module A and EIF3H of module B, thereby linking the three modules. EIF3J is a labile subunit that binds to the eIF-3 complex via EIF3B. The eIF-3 complex interacts with RPS6KB1 under conditions of nutrient depletion. Mitogenic stimulation leads to binding and activation of a complex composed of MTOR and RPTOR, leading to phosphorylation and release of RPS6KB1 and binding of EIF4B to eIF-3. Interacts (via C-terminus) with AIFM1 (via N-terminus). Interacts with DHX33; the interaction is independent of RNA. Post-translationally, phosphorylated. Phosphorylation is enhanced upon serum stimulation.

It is found in the cytoplasm. The protein localises to the nucleus. The protein resides in the perinuclear region. In terms of biological role, RNA-binding component of the eukaryotic translation initiation factor 3 (eIF-3) complex, which is required for several steps in the initiation of protein synthesis. The eIF-3 complex associates with the 40S ribosome and facilitates the recruitment of eIF-1, eIF-1A, eIF-2:GTP:methionyl-tRNAi and eIF-5 to form the 43S pre-initiation complex (43S PIC). The eIF-3 complex stimulates mRNA recruitment to the 43S PIC and scanning of the mRNA for AUG recognition. The eIF-3 complex is also required for disassembly and recycling of post-termination ribosomal complexes and subsequently prevents premature joining of the 40S and 60S ribosomal subunits prior to initiation. The eIF-3 complex specifically targets and initiates translation of a subset of mRNAs involved in cell proliferation, including cell cycling, differentiation and apoptosis, and uses different modes of RNA stem-loop binding to exert either translational activation or repression. This subunit can bind 18S rRNA. The chain is Eukaryotic translation initiation factor 3 subunit G (Eif3g) from Rattus norvegicus (Rat).